Reading from the N-terminus, the 297-residue chain is HTH-type transcriptional regulator ArgP (297 aa).

The HTH lysR-type domain maps to P4 to T60. The H-T-H motif DNA-binding region spans F21–K40.

It belongs to the LysR transcriptional regulatory family. As to quaternary structure, homodimer.

Controls the transcription of genes involved in arginine and lysine metabolism. The protein is HTH-type transcriptional regulator ArgP of Salmonella typhi.